The sequence spans 109 residues: Staphostatin B (109 aa).

Residues 97 to 101 (IGTSR) form a binds to staphopain B region.

Belongs to the protease inhibitor I57 (SspC) family. In terms of assembly, forms a stable non-covalent complex with prematurely activated/folded SspB.

It localises to the cytoplasm. Specifically inhibits the cysteine protease staphopain B (SspB) by blocking the active site of the enzyme. Probably required to protect cytoplasmic proteins from being degraded by prematurely activated/folded prostaphopain B. Also involved in growth capacity, viability and bacterial morphology. The protein is Staphostatin B (sspC) of Staphylococcus aureus (strain MRSA252).